A 513-amino-acid polypeptide reads, in one-letter code: Exoglucanase 1 (513 aa).

An N-terminal signal peptide occupies residues 1–17; the sequence is MYRKLAVISAFLATARA. A Pyrrolidone carboxylic acid modification is found at Gln18. A catalytic region spans residues 18 to 453; the sequence is QSACTLQSET…GSTGNPSGGN (436 aa). Cystine bridges form between Cys21/Cys89, Cys36/Cys42, Cys67/Cys88, Cys78/Cys84, Cys155/Cys414, Cys189/Cys227, Cys193/Cys226, Cys247/Cys273, Cys255/Cys260, and Cys278/Cys348. An N-linked (GlcNAc) asparagine glycan is attached at Asn62. Glu229 acts as the Nucleophile in catalysis. The Proton donor/acceptor role is filled by Glu234. 2 N-linked (GlcNAc) asparagine glycosylation sites follow: Asn287 and Asn401. Residues 401-437 are compositionally biased toward polar residues; the sequence is NETSSTPGAVRGSCSTSSGVPAQVESQSPNAKVTFSN. The interval 401–480 is disordered; that stretch reads NETSSTPGAV…TGSSPGPTQS (80 aa). Residues 449 to 459 are compositionally biased toward gly residues; it reads PSGGNPPGGNR. A linker region spans residues 454–477; it reads PPGGNRGTTTTRRPATTTGSSPGP. Residues 460–478 show a composition bias toward low complexity; the sequence is GTTTTRRPATTTGSSPGPT. Thr461 is a glycosylation site (O-linked (Man) threonine). O-linked (Man...) threonine glycans are attached at residues Thr462, Thr463, and Thr464. O-linked (Man) threonine glycosylation is present at Thr469. Residues Thr470 and Thr471 are each glycosylated (O-linked (Man...) threonine). O-linked (Man) serine glycosylation is found at Ser473 and Ser474. Positions 477 to 513 constitute a CBM1 domain; the sequence is PTQSHYGQCGGIGYSGPTVCASGTTCQVLNPYYSQCL. O-linked (Man) threonine glycosylation is present at Thr478. O-linked (Man) serine glycosylation is found at Ser480 and Ser491. 2 cysteine pairs are disulfide-bonded: Cys485-Cys502 and Cys496-Cys512.

This sequence belongs to the glycosyl hydrolase 7 (cellulase C) family. In terms of processing, N-glycosylated. The catalytic core domain comprises three N-linked glycans which each consist of a single N-acetylglucosamine residue. Post-translationally, O-glycosylated. Within the linker domain, all 8 threonines are variably glycosylated with between at least one, and up to three, mannose residues per site. All serines in this domain are at least partially glycosylated with a single mannose residue. O-glycosylation of the cellulase linker provides protection from proteolysis. Linker glycans also contribute to binding affinity of cellobiohydrolases to cellulose.

The protein resides in the secreted. The enzyme catalyses Hydrolysis of (1-&gt;4)-beta-D-glucosidic linkages in cellulose and cellotetraose, releasing cellobiose from the non-reducing ends of the chains.. Its function is as follows. Exocellobiohydrolases (CBH) that catalyzes the hydrolysis of 1,4-beta-D-glucosidic bonds in cellulose to release the disaccharide cellobiose. The degradation of cellulose involves an interplay between different cellulolytic enzymes. Hydrolysis starts with endoglucanases (EGs), which cut internal beta-1,4-glucosidic bonds in cellulose to reduce the polymerization degree of the substrate and create new chain ends for exocellobiohydrolases (CBHs). The CBHs release the disaccharide cellobiose from the non-reducing end of the cellulose polymer chain. Finally, beta-1,4-glucosidases hydrolyze the cellobiose and other short cello-oligosaccharides into glucose units. The protein is Exoglucanase 1 (cbh1) of Hypocrea jecorina (Trichoderma reesei).